The following is a 533-amino-acid chain: Zona pellucida sperm-binding protein 3 receptor (533 aa).

The signal sequence occupies residues 1 to 28 (MFPRLQAVSAPALLQITLMAVLLAPVLG). 7 consecutive Sushi domains span residues 29-88 (DCGP…FCAK), 89-150 (KRCR…ECVI), 151-215 (VKCD…TCEK), 216-275 (VICR…TCEP), 276-342 (NGCI…GCER), 343-408 (VCCP…ACES), and 409-467 (AVCL…KCEW). Disulfide bonds link Cys30–Cys74, Cys60–Cys86, Cys91–Cys132, Cys118–Cys148, Cys153–Cys196, Cys182–Cys213, Cys218–Cys260, Cys246–Cys273, Cys278–Cys328, Cys312–Cys340, Cys345–Cys393, Cys378–Cys406, Cys411–Cys452, and Cys438–Cys465. N-linked (GlcNAc...) asparagine glycosylation is found at Asn68 and Asn77. N-linked (GlcNAc...) asparagine glycans are attached at residues Asn185, Asn191, and Asn200. 2 N-linked (GlcNAc...) asparagine glycosylation sites follow: Asn433 and Asn455.

In terms of assembly, homooligomer; disulfide-linked. May contain 6-8 monomers per oligomer. The N-terminus may be blocked. Testis. Not expressed in heart, brain, liver or kidney.

It localises to the cytoplasmic vesicle. The protein resides in the secretory vesicle. It is found in the acrosome lumen. In terms of biological role, probably involved in the formation of the dense core and M1 domain of the acrosome. May also regulate the release of certain secretory proteins following the acrosomal reaction. This Cavia porcellus (Guinea pig) protein is Zona pellucida sperm-binding protein 3 receptor (ZP3R).